The chain runs to 68 residues: Venom peptide 3 (68 aa).

The signal sequence occupies residues 1 to 25; sequence MTKQSIVIVLFAAIAMMACLQRVTA. 5 AXPX repeats span residues 25–28, 33–36, 37–40, 41–44, and 47–50; these read AEPA, AAPI, AEPY, ANPE, and ASPE. Positions 26–51 are excised as a propeptide; the sequence is EPAPEPIAAPIAEPYANPEAIASPEA. Leucine amide is present on Leu-65.

In terms of tissue distribution, expressed by the venom gland.

The protein localises to the secreted. Its subcellular location is the target cell membrane. In terms of biological role, antimicrobial peptide with strong activity against the fungi B.cinerea (MIC=5 uM) and C.albicans (MIC=33 uM), and no activity against the Gram-negative bacterium E.coli (MIC&gt;200 uM) and the Gram-positive bacterium S.aureus (MIC&gt;200 uM). Shows cytolytic activity against insect cell lines. Has no hemolytic activity against human erythrocytes. In vivo, peptide injection in the vicinity of the head and thorax of lepidopteran larvae induces feeding disorder that lasts one or two days before recovering. The sequence is that of Venom peptide 3 from Orancistrocerus drewseni (Solitary wasp).